The sequence spans 374 residues: Pectate lyase 1 (374 aa).

The signal sequence occupies residues 1–21; it reads MDSPCLVALLVFSFVIGSCFS. Disulfide bonds link C28-C45 and C128-C147. N158 carries N-linked (GlcNAc...) asparagine glycosylation. D170 serves as a coordination point for Ca(2+). N191 carries N-linked (GlcNAc...) (complex) asparagine glycosylation. Ca(2+) contacts are provided by D194 and D198. R250 is a catalytic residue. The N-linked (GlcNAc...) asparagine glycan is linked to N293. An intrachain disulfide couples C306 to C312. N354 is a glycosylation site (N-linked (GlcNAc...) (complex) asparagine).

The protein belongs to the polysaccharide lyase 1 family. Amb a subfamily. The cofactor is Ca(2+). N-glycosylated; contains fucose and xylose.

It carries out the reaction Eliminative cleavage of (1-&gt;4)-alpha-D-galacturonan to give oligosaccharides with 4-deoxy-alpha-D-galact-4-enuronosyl groups at their non-reducing ends.. Its pathway is glycan metabolism; pectin degradation; 2-dehydro-3-deoxy-D-gluconate from pectin: step 2/5. Functionally, has pectate lyase activity. The polypeptide is Pectate lyase 1 (Cryptomeria japonica (Japanese cedar)).